The following is a 267-amino-acid chain: Mannose-specific lectin 1 (267 aa).

The signal sequence occupies residues 1–26; it reads MAKLLLFLLPAILGLLVPPRSWSAVA. Bulb-type lectin domains lie at 29–134 and 148–255; these read TNYL…PSVP and NNLL…PQAK. Residues 54–58, Tyr62, Trp66, Gln67, 173–177, Tyr181, and 185–188 each bind beta-D-mannose; these read QDDCN, QGDCN, and YGWQ. A Carbohydrate-binding motif 1 motif is present at residues 54-62; it reads QDDCNLVLY. Intrachain disulfides connect Cys57-Cys77 and Cys176-Cys198. The Carbohydrate-binding motif 2 signature appears at 173–181; sequence QGDCNLVLY.

In terms of assembly, forms heterotetramer of 2 chains 1 and 2 chains 2 arranged as a dimer of chain 1 and chain 2 heterodimers.

It is found in the secreted. Mannose-specific lectin. Shows agglutinating activity towards erythrocytes from rabbit. This chain is Mannose-specific lectin 1, found in Colocasia esculenta (Wild taro).